Consider the following 152-residue polypeptide: Nucleoside diphosphate kinase (152 aa).

ATP is bound by residues lysine 11, phenylalanine 59, arginine 87, threonine 93, arginine 104, and asparagine 114. Histidine 117 acts as the Pros-phosphohistidine intermediate in catalysis.

Belongs to the NDK family. As to quaternary structure, homotetramer. It depends on Mg(2+) as a cofactor.

It is found in the cytoplasm. It carries out the reaction a 2'-deoxyribonucleoside 5'-diphosphate + ATP = a 2'-deoxyribonucleoside 5'-triphosphate + ADP. The enzyme catalyses a ribonucleoside 5'-diphosphate + ATP = a ribonucleoside 5'-triphosphate + ADP. Its function is as follows. Major role in the synthesis of nucleoside triphosphates other than ATP. The ATP gamma phosphate is transferred to the NDP beta phosphate via a ping-pong mechanism, using a phosphorylated active-site intermediate. The protein is Nucleoside diphosphate kinase of Prochlorococcus marinus (strain MIT 9215).